Here is a 336-residue protein sequence, read N- to C-terminus: L-rhamnono-gamma-lactonase (336 aa).

It belongs to the metallo-dependent hydrolases superfamily. Requires a divalent metal cation as cofactor.

It catalyses the reaction L-rhamnono-1,4-lactone + H2O = L-rhamnonate + H(+). With respect to regulation, inhibited by Zn(2+), Fe(2+) and Cu(2+), but not by EDTA. Functionally, hydrolase with high substrate specificity for L-rhamnono-1,4-lactone. Catalyzes the second step in an alternative pathway for rhamnose utilization that does not involve phosphorylated intermediates. This chain is L-rhamnono-gamma-lactonase (LRA2), found in Scheffersomyces stipitis (strain ATCC 58785 / CBS 6054 / NBRC 10063 / NRRL Y-11545) (Yeast).